Reading from the N-terminus, the 256-residue chain is Probable ABC transporter ATP-binding protein spyM18_0273 (256 aa).

Residues 4 to 246 (LEINNLHVSI…EKEGYAGIAQ (243 aa)) form the ABC transporter domain. 36 to 43 (GPNGTGKS) is an ATP binding site.

It belongs to the ABC transporter superfamily. Ycf16 family.

It localises to the cell membrane. This chain is Probable ABC transporter ATP-binding protein spyM18_0273, found in Streptococcus pyogenes serotype M18 (strain MGAS8232).